The chain runs to 157 residues: Endoribonuclease YbeY (157 aa).

Residues His114, His118, and His124 each contribute to the Zn(2+) site.

This sequence belongs to the endoribonuclease YbeY family. Requires Zn(2+) as cofactor.

It is found in the cytoplasm. Functionally, single strand-specific metallo-endoribonuclease involved in late-stage 70S ribosome quality control and in maturation of the 3' terminus of the 16S rRNA. This chain is Endoribonuclease YbeY, found in Salmonella dublin (strain CT_02021853).